We begin with the raw amino-acid sequence, 206 residues long: Small ribosomal subunit protein uS4 (206 aa).

The S4 RNA-binding domain occupies glycine 96 to lysine 156.

Belongs to the universal ribosomal protein uS4 family. In terms of assembly, part of the 30S ribosomal subunit. Contacts protein S5. The interaction surface between S4 and S5 is involved in control of translational fidelity.

Its function is as follows. One of the primary rRNA binding proteins, it binds directly to 16S rRNA where it nucleates assembly of the body of the 30S subunit. In terms of biological role, with S5 and S12 plays an important role in translational accuracy. This Glaesserella parasuis serovar 5 (strain SH0165) (Haemophilus parasuis) protein is Small ribosomal subunit protein uS4.